A 431-amino-acid chain; its full sequence is Ribosomal protein uS12 methylthiotransferase RimO (431 aa).

The MTTase N-terminal domain occupies 4–120 (LKLYVIVLGC…LAESINKTKK (117 aa)). [4Fe-4S] cluster contacts are provided by cysteine 13, cysteine 49, cysteine 83, cysteine 150, cysteine 154, and cysteine 157. The region spanning 136–365 (DSDLPYAYVK…MEVQAEISFL (230 aa)) is the Radical SAM core domain. In terms of domain architecture, TRAM spans 368–431 (QRLVGKVIDV…TYDLEGELVE (64 aa)).

Belongs to the methylthiotransferase family. RimO subfamily. [4Fe-4S] cluster is required as a cofactor.

Its subcellular location is the cytoplasm. The enzyme catalyses L-aspartate(89)-[ribosomal protein uS12]-hydrogen + (sulfur carrier)-SH + AH2 + 2 S-adenosyl-L-methionine = 3-methylsulfanyl-L-aspartate(89)-[ribosomal protein uS12]-hydrogen + (sulfur carrier)-H + 5'-deoxyadenosine + L-methionine + A + S-adenosyl-L-homocysteine + 2 H(+). Functionally, catalyzes the methylthiolation of an aspartic acid residue of ribosomal protein uS12. The sequence is that of Ribosomal protein uS12 methylthiotransferase RimO from Fervidobacterium nodosum (strain ATCC 35602 / DSM 5306 / Rt17-B1).